The chain runs to 349 residues: Anthranilate phosphoribosyltransferase (349 aa).

Residues glycine 82, 85–86 (GD), 92–95 (NVST), 110–118 (KHGNRAVSG), and serine 122 each bind 5-phospho-alpha-D-ribose 1-diphosphate. Glycine 82 contacts anthranilate. Residue serine 94 participates in Mg(2+) binding. Asparagine 113 contributes to the anthranilate binding site. Arginine 168 lines the anthranilate pocket. Positions 227 and 228 each coordinate Mg(2+).

Belongs to the anthranilate phosphoribosyltransferase family. Homodimer. The cofactor is Mg(2+).

The catalysed reaction is N-(5-phospho-beta-D-ribosyl)anthranilate + diphosphate = 5-phospho-alpha-D-ribose 1-diphosphate + anthranilate. It functions in the pathway amino-acid biosynthesis; L-tryptophan biosynthesis; L-tryptophan from chorismate: step 2/5. Functionally, catalyzes the transfer of the phosphoribosyl group of 5-phosphorylribose-1-pyrophosphate (PRPP) to anthranilate to yield N-(5'-phosphoribosyl)-anthranilate (PRA). The chain is Anthranilate phosphoribosyltransferase from Pseudomonas entomophila (strain L48).